A 302-amino-acid polypeptide reads, in one-letter code: MDQKRLTHLRQLEAESIHIIREVAAEFANPVMLYSIGKDSSVMLHLARKAFYPGTLPFPLLHVDTGWKFREMYAFRDRTANTYGCELLVHKNPEGVAMDINPFVHGSAKHTDIMKTEGLKQALNKYGFDAAFGGARRDEEKSRAKERIYSFRDRFHRWDPKNQRPELWRNYNGQINTGESIRVFPLSNWTEQDIWQYIWLENIEIVPLYLAAERPVLERDGMLMMVDDDRIDLQPGEVIKKRMVRFRTLGCWPLTGAVESHAQTLPEIIEEMLVSTTSERQGRVIDRDQAGSMELKKRQGYF.

It belongs to the PAPS reductase family. CysD subfamily. In terms of assembly, heterodimer composed of CysD, the smaller subunit, and CysN.

It carries out the reaction sulfate + ATP + H(+) = adenosine 5'-phosphosulfate + diphosphate. It functions in the pathway sulfur metabolism; hydrogen sulfide biosynthesis; sulfite from sulfate: step 1/3. In terms of biological role, with CysN forms the ATP sulfurylase (ATPS) that catalyzes the adenylation of sulfate producing adenosine 5'-phosphosulfate (APS) and diphosphate, the first enzymatic step in sulfur assimilation pathway. APS synthesis involves the formation of a high-energy phosphoric-sulfuric acid anhydride bond driven by GTP hydrolysis by CysN coupled to ATP hydrolysis by CysD. The sequence is that of Sulfate adenylyltransferase subunit 2 from Salmonella arizonae (strain ATCC BAA-731 / CDC346-86 / RSK2980).